A 382-amino-acid polypeptide reads, in one-letter code: Beta-lactamase CMY-10 (382 aa).

Residues 1 to 23 (MQQRQSILWGAVATLMWAGLAHA) form the signal peptide. Ser-88 acts as the Acyl-ester intermediate in catalysis. An AMP-binding site is contributed by Ser-88. Residues Ser-88, Gln-144, Tyr-174, Thr-336, Ser-338, and Asn-363 each coordinate GMP. Residues Ser-88, Gln-144, Tyr-174, Thr-336, Ser-338, and Asn-363 each coordinate IMP. Position 174 (Tyr-174) interacts with AMP. An AMP-binding site is contributed by Ser-338.

This sequence belongs to the class-C beta-lactamase family. As to quaternary structure, monomer.

The catalysed reaction is a beta-lactam + H2O = a substituted beta-amino acid. With respect to regulation, inhibited by various nucleotides in vitro, including adenosine 5'-(P-acetyl)monophosphate (acAMP), inosine-5'-monophosphate (IMP) and guanosine-5'-monophosphate (GMP); IMP and GMP exhibit strongest competitive inhibition. Inhibited by the beta-lactamase-blocking agent, avibactam. Inhibited by clavulanic acid. Weakly inhibited by citric acid. Class C beta-lactamase which confers resistance to penicillins and cephalosporins. Has benzylpenicillin-, ceftazidime-, nitrocefin- and imipenem-hydrolyzing activity. The chain is Beta-lactamase CMY-10 from Klebsiella aerogenes (Enterobacter aerogenes).